The primary structure comprises 264 residues: Large ribosomal subunit protein uL2 (264 aa).

It belongs to the universal ribosomal protein uL2 family.

The protein resides in the cytoplasm. The protein is Large ribosomal subunit protein uL2 (RPL8) of Tetrahymena thermophila (strain SB210).